The chain runs to 1195 residues: ATP-dependent DNA helicase Hel308 (1195 aa).

Residues glutamine 20 and 39–46 (IPTASGKT) contribute to the ATP site. The Helicase ATP-binding domain maps to 26 to 196 (RGLLDKNKNF…WLNAELIVDD (171 aa)). The short motif at 143 to 146 (DEIH) is the DEAH box element. The DOD-type homing endonuclease domain occupies 451 to 584 (FIGYFIGDGY…LQFVLLRFGI (134 aa)).

It belongs to the helicase family. Hel308 subfamily. In terms of assembly, monomer. This protein undergoes a protein self splicing that involves a post-translational excision of the intervening region (intein) followed by peptide ligation.

It carries out the reaction Couples ATP hydrolysis with the unwinding of duplex DNA by translocating in the 3'-5' direction.. It catalyses the reaction ATP + H2O = ADP + phosphate + H(+). Its function is as follows. DNA-dependent ATPase and 3'-5' DNA helicase that may be involved in repair of stalled replication forks. The sequence is that of ATP-dependent DNA helicase Hel308 from Methanocaldococcus jannaschii (strain ATCC 43067 / DSM 2661 / JAL-1 / JCM 10045 / NBRC 100440) (Methanococcus jannaschii).